A 207-amino-acid chain; its full sequence is Guanylate kinase (207 aa).

Positions 7–185 (GIVLVLCAPS…AYDELRAAYI (179 aa)) constitute a Guanylate kinase-like domain. 14 to 21 (APSGTGKT) provides a ligand contact to ATP.

It belongs to the guanylate kinase family.

It is found in the cytoplasm. It carries out the reaction GMP + ATP = GDP + ADP. In terms of biological role, essential for recycling GMP and indirectly, cGMP. This is Guanylate kinase from Nitratidesulfovibrio vulgaris (strain ATCC 29579 / DSM 644 / CCUG 34227 / NCIMB 8303 / VKM B-1760 / Hildenborough) (Desulfovibrio vulgaris).